The following is a 428-amino-acid chain: Glutamyl-tRNA reductase (428 aa).

Residues 50–53 (TCNR), Ser-110, 115–117 (ETQ), and Gln-121 contribute to the substrate site. The Nucleophile role is filled by Cys-51. 190 to 195 (GAGEMG) contacts NADP(+).

The protein belongs to the glutamyl-tRNA reductase family. Homodimer.

It carries out the reaction (S)-4-amino-5-oxopentanoate + tRNA(Glu) + NADP(+) = L-glutamyl-tRNA(Glu) + NADPH + H(+). Its pathway is porphyrin-containing compound metabolism; protoporphyrin-IX biosynthesis; 5-aminolevulinate from L-glutamyl-tRNA(Glu): step 1/2. Catalyzes the NADPH-dependent reduction of glutamyl-tRNA(Glu) to glutamate 1-semialdehyde (GSA). The chain is Glutamyl-tRNA reductase from Campylobacter curvus (strain 525.92).